The primary structure comprises 93 residues: uncharacterized protein (93 aa).

The disordered stretch occupies residues 73 to 93 (KWTVSGPVKQDTGKTDPAEKN). Over residues 83 to 93 (DTGKTDPAEKN) the composition is skewed to basic and acidic residues.

This is an uncharacterized protein from Rhodobacter capsulatus (Rhodopseudomonas capsulata).